A 167-amino-acid polypeptide reads, in one-letter code: UPF0225 protein VV1358 (167 aa).

Belongs to the UPF0225 family.

This is UPF0225 protein VV1358 from Vibrio vulnificus (strain YJ016).